Here is a 217-residue protein sequence, read N- to C-terminus: Neuron-specific vesicular protein calcyon (217 aa).

The interval 1 to 25 is disordered; it reads MVKLGCSFSGKPGKDPGDQDGAAMD. Residues 1 to 87 are Extracellular-facing; sequence MVKLGCSFSG…EEGRRLPTAR (87 aa). N73 carries an N-linked (GlcNAc...) asparagine glycan. A helical transmembrane segment spans residues 88–108; that stretch reads MIAFAMALLGCVLIMYKAIWY. At 109–217 the chain is on the cytoplasmic side; it reads DQFTCPDGFL…AGSAAPPPAQ (109 aa). The interval 162–217 is disordered; it reads PAAWGDGYRAAKEERKGPTQAGAAAAATEPPGKPSAKAEKEAARKAAGSAAPPPAQ.

It belongs to the NSG family. In terms of assembly, interacts with CLTA. Post-translationally, glycosylated. As to expression, expressed in the pyramidal cells of the prefrontal cortex, in hypothalamus and in caudate nucleus. No expression in spleen. Up-regulated in the prefrontal cortex of schizophrenic patients with nearly twice the levels of non-schizophrenics.

It is found in the cytoplasmic vesicle membrane. It localises to the cell membrane. In terms of biological role, interacts with clathrin light chain A and stimulates clathrin self-assembly and clathrin-mediated endocytosis. The chain is Neuron-specific vesicular protein calcyon (CALY) from Homo sapiens (Human).